Here is a 205-residue protein sequence, read N- to C-terminus: Suppressor of IKBKE 1 (205 aa).

2 coiled-coil regions span residues 4-32 (TIDKILQDAKTLLERLKDHDNAAESLIDQ) and 154-192 (KAIQLDEDQAYNIQERLAQLELENKELREILSVRNESLR).

Belongs to the SIKE family. In terms of assembly, interacts with IKBKE and TBK1 via its coiled coil region. Interaction with TBK1 is disrupted upon viral infection or TLR3 stimulation. Interacts with CDC42BPB. Associates with the STRIPAK core complex composed of PP2A catalytic and scaffolding subunits, the striatins (PP2A regulatory subunits), the striatin-associated proteins MOB4, STRIP1 and STRIP2, PDCD10 and members of the STE20 kinases, such as STK24 and STK26.

It is found in the cytoplasm. In terms of biological role, suppressor of IKK-epsilon. Associates with the striatin-interacting phosphatase and kinase (STRIPAK) core complex, forming the extended (SIKE1:SLMAP)STRIPAK complex. The (SIKE1:SLMAP)STRIPAK complex dephosphorylates STK3 leading to the inhibition of Hippo signaling and the control of cell growth. This is Suppressor of IKBKE 1 (sike1) from Xenopus laevis (African clawed frog).